Consider the following 117-residue polypeptide: Large ribosomal subunit protein uL18 (117 aa).

Belongs to the universal ribosomal protein uL18 family. In terms of assembly, part of the 50S ribosomal subunit; part of the 5S rRNA/L5/L18/L25 subcomplex. Contacts the 5S and 23S rRNAs.

Functionally, this is one of the proteins that bind and probably mediate the attachment of the 5S RNA into the large ribosomal subunit, where it forms part of the central protuberance. In Klebsiella pneumoniae subsp. pneumoniae (strain ATCC 700721 / MGH 78578), this protein is Large ribosomal subunit protein uL18.